The sequence spans 1427 residues: DNA-directed RNA polymerase subunit beta' (1427 aa).

Zn(2+) contacts are provided by cysteine 70, cysteine 72, cysteine 85, and cysteine 88. Mg(2+) is bound by residues aspartate 461, aspartate 463, and aspartate 465. Zn(2+) is bound by residues cysteine 810, cysteine 884, cysteine 891, and cysteine 894. Disordered stretches follow at residues glutamine 1044–glycine 1065 and proline 1394–alanine 1427.

This sequence belongs to the RNA polymerase beta' chain family. In terms of assembly, the RNAP catalytic core consists of 2 alpha, 1 beta, 1 beta' and 1 omega subunit. When a sigma factor is associated with the core the holoenzyme is formed, which can initiate transcription. The cofactor is Mg(2+). Zn(2+) is required as a cofactor.

It carries out the reaction RNA(n) + a ribonucleoside 5'-triphosphate = RNA(n+1) + diphosphate. Its function is as follows. DNA-dependent RNA polymerase catalyzes the transcription of DNA into RNA using the four ribonucleoside triphosphates as substrates. This is DNA-directed RNA polymerase subunit beta' from Novosphingobium aromaticivorans (strain ATCC 700278 / DSM 12444 / CCUG 56034 / CIP 105152 / NBRC 16084 / F199).